The chain runs to 166 residues: uncharacterized protein (166 aa).

3 helical membrane-spanning segments follow: residues 4 to 24, 101 to 121, and 146 to 166; these read LNIF…EASI, LITC…SEAI, and SWSS…QCFL.

It localises to the membrane. This is an uncharacterized protein from Saccharomyces cerevisiae (strain ATCC 204508 / S288c) (Baker's yeast).